Here is a 225-residue protein sequence, read N- to C-terminus: Adenylate kinase (225 aa).

ATP is bound at residue 10–15; the sequence is GSGKGT. Positions 30–59 are NMP; sequence ESGAIFRENISKGTEIGKKAKEYIDRGDLV. AMP-binding positions include S31, R36, 57–59, 85–88, and Q92; these read DLV and GFPR. The tract at residues 126 to 165 is LID; that stretch reads GRRLCENDNNHPNNIFIDAIKPDGDKCRVCGGALSARSDD. R127 serves as a coordination point for ATP. Positions 162 and 174 each coordinate AMP. Residue P211 participates in ATP binding.

This sequence belongs to the adenylate kinase family. Monomer.

Its subcellular location is the cytoplasm. The catalysed reaction is AMP + ATP = 2 ADP. The protein operates within purine metabolism; AMP biosynthesis via salvage pathway; AMP from ADP: step 1/1. Functionally, catalyzes the reversible transfer of the terminal phosphate group between ATP and AMP. Plays an important role in cellular energy homeostasis and in adenine nucleotide metabolism. The chain is Adenylate kinase from Desulfatibacillum aliphaticivorans.